The following is a 248-amino-acid chain: MLYLHDVWVNWFEGEENGYNVCHFYEWRKDDTIELLDQVPLLKVDATLYHYIENELLELPQKLLEDVYHKAYIRKNHERLQQEYCFVVTDGKGIIAIDSIGYNVPIRKSRLIPRQEQMVYEMVENVQAEKYEFQVEEIEKEHHILSPSPFIMNGLTRKERQLKQLLFMALDQLHTTKNPAEIRYWFTEWDPSAYGMVQHMEFEDVWAKLYDEAKTGWSEKHEQLCERLVKGQPFFEKLWEMENEQKVN.

This sequence belongs to the UPF0736 family.

The sequence is that of UPF0736 protein BcerKBAB4_1085 from Bacillus mycoides (strain KBAB4) (Bacillus weihenstephanensis).